Consider the following 355-residue polypeptide: UDP-N-acetylglucosamine--N-acetylmuramyl-(pentapeptide) pyrophosphoryl-undecaprenol N-acetylglucosamine transferase (355 aa).

UDP-N-acetyl-alpha-D-glucosamine-binding positions include 15–17 (TGG), N127, R163, S191, I244, 263–268 (ALTVSE), and Q288.

This sequence belongs to the glycosyltransferase 28 family. MurG subfamily.

It is found in the cell inner membrane. It catalyses the reaction di-trans,octa-cis-undecaprenyl diphospho-N-acetyl-alpha-D-muramoyl-L-alanyl-D-glutamyl-meso-2,6-diaminopimeloyl-D-alanyl-D-alanine + UDP-N-acetyl-alpha-D-glucosamine = di-trans,octa-cis-undecaprenyl diphospho-[N-acetyl-alpha-D-glucosaminyl-(1-&gt;4)]-N-acetyl-alpha-D-muramoyl-L-alanyl-D-glutamyl-meso-2,6-diaminopimeloyl-D-alanyl-D-alanine + UDP + H(+). The protein operates within cell wall biogenesis; peptidoglycan biosynthesis. In terms of biological role, cell wall formation. Catalyzes the transfer of a GlcNAc subunit on undecaprenyl-pyrophosphoryl-MurNAc-pentapeptide (lipid intermediate I) to form undecaprenyl-pyrophosphoryl-MurNAc-(pentapeptide)GlcNAc (lipid intermediate II). The protein is UDP-N-acetylglucosamine--N-acetylmuramyl-(pentapeptide) pyrophosphoryl-undecaprenol N-acetylglucosamine transferase of Shigella boydii serotype 18 (strain CDC 3083-94 / BS512).